A 387-amino-acid polypeptide reads, in one-letter code: Galactokinase (387 aa).

A substrate-binding site is contributed by 33 to 36 (EHID). Residues Ser-67 and 124 to 130 (GAGLSSS) contribute to the ATP site. Residues Ser-130 and Glu-162 each contribute to the Mg(2+) site. Asp-174 functions as the Proton acceptor in the catalytic mechanism. Tyr-224 is a substrate binding site.

Belongs to the GHMP kinase family. GalK subfamily.

The protein localises to the cytoplasm. It catalyses the reaction alpha-D-galactose + ATP = alpha-D-galactose 1-phosphate + ADP + H(+). Its pathway is carbohydrate metabolism; galactose metabolism. In terms of biological role, catalyzes the transfer of the gamma-phosphate of ATP to D-galactose to form alpha-D-galactose-1-phosphate (Gal-1-P). This Clostridium perfringens (strain ATCC 13124 / DSM 756 / JCM 1290 / NCIMB 6125 / NCTC 8237 / Type A) protein is Galactokinase.